A 79-amino-acid polypeptide reads, in one-letter code: Cytochrome b-c1 complex subunit 10 (79 aa).

Residues Met1–Glu23 are Mitochondrial matrix-facing. The chain crosses the membrane as a helical span at residues Arg24–Ala47. Over Met48–Leu79 the chain is Mitochondrial intermembrane.

Belongs to the UQCR11/QCR10 family. As to quaternary structure, component of the ubiquinol-cytochrome c oxidoreductase (cytochrome b-c1 complex, complex III, CIII), a multisubunit enzyme composed of 3 respiratory subunits cytochrome b, cytochrome c1 and Rieske protein, 2 core protein subunits, and additional low-molecular weight protein subunits. The complex exists as an obligatory dimer and forms supercomplexes (SCs) in the inner mitochondrial membrane with cytochrome c oxidase (complex IV, CIV).

Its subcellular location is the mitochondrion inner membrane. Functionally, component of the ubiquinol-cytochrome c oxidoreductase, a multisubunit transmembrane complex that is part of the mitochondrial electron transport chain which drives oxidative phosphorylation. The respiratory chain contains 3 multisubunit complexes succinate dehydrogenase (complex II, CII), ubiquinol-cytochrome c oxidoreductase (cytochrome b-c1 complex, complex III, CIII) and cytochrome c oxidase (complex IV, CIV), that cooperate to transfer electrons derived from NADH and succinate to molecular oxygen, creating an electrochemical gradient over the inner membrane that drives transmembrane transport and the ATP synthase. The cytochrome b-c1 complex catalyzes electron transfer from ubiquinol to cytochrome c, linking this redox reaction to translocation of protons across the mitochondrial inner membrane, with protons being carried across the membrane as hydrogens on the quinol. In the process called Q cycle, 2 protons are consumed from the matrix, 4 protons are released into the intermembrane space and 2 electrons are passed to cytochrome c. QCR10 has a role in CIII assembly and RIP1 stability. The protein is Cytochrome b-c1 complex subunit 10 of Schizosaccharomyces pombe (strain 972 / ATCC 24843) (Fission yeast).